The sequence spans 256 residues: Na(+)-translocating NADH-quinone reductase subunit C (256 aa).

A helical membrane pass occupies residues 12-32; it reads LGVVIGLSLVCSIIVSTAAVG. Threonine 224 carries the post-translational modification FMN phosphoryl threonine.

Belongs to the NqrC family. As to quaternary structure, composed of six subunits; NqrA, NqrB, NqrC, NqrD, NqrE and NqrF. It depends on FMN as a cofactor.

It localises to the cell inner membrane. It carries out the reaction a ubiquinone + n Na(+)(in) + NADH + H(+) = a ubiquinol + n Na(+)(out) + NAD(+). Its activity is regulated as follows. This reaction is tightly coupled to the Na(+) pumping activity and specifically requires Na(+) for activity. Inhibited by korormicin and 2-N-heptyl-4-hydroxyquinoline N-oxide (HQNO). In terms of biological role, NQR complex catalyzes the reduction of ubiquinone-1 to ubiquinol by two successive reactions, coupled with the transport of Na(+) ions from the cytoplasm to the periplasm. NqrA to NqrE are probably involved in the second step, the conversion of ubisemiquinone to ubiquinol. This is Na(+)-translocating NADH-quinone reductase subunit C from Vibrio alginolyticus.